Consider the following 341-residue polypeptide: Anthranilate phosphoribosyltransferase (341 aa).

5-phospho-alpha-D-ribose 1-diphosphate is bound by residues G81, 84–85, S89, 91–94, 109–117, and S121; these read GD, NIST, and KHGNRSASS. G81 lines the anthranilate pocket. Residue S93 coordinates Mg(2+). Anthranilate is bound at residue N112. Residue R167 participates in anthranilate binding. Mg(2+) is bound by residues D225 and E226.

It belongs to the anthranilate phosphoribosyltransferase family. Homodimer. Mg(2+) serves as cofactor.

The catalysed reaction is N-(5-phospho-beta-D-ribosyl)anthranilate + diphosphate = 5-phospho-alpha-D-ribose 1-diphosphate + anthranilate. It participates in amino-acid biosynthesis; L-tryptophan biosynthesis; L-tryptophan from chorismate: step 2/5. In terms of biological role, catalyzes the transfer of the phosphoribosyl group of 5-phosphorylribose-1-pyrophosphate (PRPP) to anthranilate to yield N-(5'-phosphoribosyl)-anthranilate (PRA). The protein is Anthranilate phosphoribosyltransferase of Nocardioides sp. (strain ATCC BAA-499 / JS614).